The sequence spans 570 residues: Proline--tRNA ligase (570 aa).

Belongs to the class-II aminoacyl-tRNA synthetase family. ProS type 1 subfamily. In terms of assembly, homodimer.

The protein resides in the cytoplasm. It catalyses the reaction tRNA(Pro) + L-proline + ATP = L-prolyl-tRNA(Pro) + AMP + diphosphate. Its function is as follows. Catalyzes the attachment of proline to tRNA(Pro) in a two-step reaction: proline is first activated by ATP to form Pro-AMP and then transferred to the acceptor end of tRNA(Pro). As ProRS can inadvertently accommodate and process non-cognate amino acids such as alanine and cysteine, to avoid such errors it has two additional distinct editing activities against alanine. One activity is designated as 'pretransfer' editing and involves the tRNA(Pro)-independent hydrolysis of activated Ala-AMP. The other activity is designated 'posttransfer' editing and involves deacylation of mischarged Ala-tRNA(Pro). The misacylated Cys-tRNA(Pro) is not edited by ProRS. The polypeptide is Proline--tRNA ligase (Syntrophomonas wolfei subsp. wolfei (strain DSM 2245B / Goettingen)).